A 448-amino-acid chain; its full sequence is Pentatricopeptide repeat-containing protein At1g80550, mitochondrial (448 aa).

A mitochondrion-targeting transit peptide spans 1 to 21 (MLLLRRLNRVRIASPYSVRLL). PPR repeat units follow at residues 80–110 (TTET…MIGN), 116–146 (NHVT…LDDF), 150–186 (DETS…GFSV), 188–222 (NTKI…GVTK), 223–257 (DLFS…RMKL), 258–292 (DVVA…GCEP), 293–327 (NVAT…GCQP), 331–359 (TYMC…GVRP), 360–394 (KMDT…GDTP), and 395–429 (DSAA…GLSP).

It belongs to the PPR family. P subfamily.

It is found in the mitochondrion. This is Pentatricopeptide repeat-containing protein At1g80550, mitochondrial from Arabidopsis thaliana (Mouse-ear cress).